A 110-amino-acid polypeptide reads, in one-letter code: uncharacterized protein (110 aa).

This is an uncharacterized protein from Autographa californica nuclear polyhedrosis virus (AcMNPV).